We begin with the raw amino-acid sequence, 343 residues long: Anthranilate phosphoribosyltransferase (343 aa).

5-phospho-alpha-D-ribose 1-diphosphate-binding positions include Gly84, 87-88 (GD), Thr92, 94-97 (NIST), 112-120 (KHGNRGVSS), and Ser124. Residue Gly84 participates in anthranilate binding. Ser96 serves as a coordination point for Mg(2+). Asn115 lines the anthranilate pocket. Position 170 (Arg170) interacts with anthranilate. Mg(2+) is bound by residues Asp229 and Glu230.

The protein belongs to the anthranilate phosphoribosyltransferase family. Homodimer. Requires Mg(2+) as cofactor.

The enzyme catalyses N-(5-phospho-beta-D-ribosyl)anthranilate + diphosphate = 5-phospho-alpha-D-ribose 1-diphosphate + anthranilate. It participates in amino-acid biosynthesis; L-tryptophan biosynthesis; L-tryptophan from chorismate: step 2/5. In terms of biological role, catalyzes the transfer of the phosphoribosyl group of 5-phosphorylribose-1-pyrophosphate (PRPP) to anthranilate to yield N-(5'-phosphoribosyl)-anthranilate (PRA). The protein is Anthranilate phosphoribosyltransferase of Burkholderia thailandensis (strain ATCC 700388 / DSM 13276 / CCUG 48851 / CIP 106301 / E264).